Consider the following 496-residue polypeptide: Chaperone SurA (496 aa).

The signal sequence occupies residues 1-42 (MACKSTAVRSATRVAPTRRLGMVTGALVALMAGAALLPAAHA). The tract at residues 53 to 80 (RGIFTTPDASPSQPLLRGTLPGPSTASG) is disordered. PpiC domains lie at 235–337 (VQEY…KLVD) and 349–447 (VAQT…QVEG).

The protein localises to the periplasm. The enzyme catalyses [protein]-peptidylproline (omega=180) = [protein]-peptidylproline (omega=0). Its function is as follows. Chaperone involved in the correct folding and assembly of outer membrane proteins. Recognizes specific patterns of aromatic residues and the orientation of their side chains, which are found more frequently in integral outer membrane proteins. May act in both early periplasmic and late outer membrane-associated steps of protein maturation. This Ralstonia nicotianae (strain ATCC BAA-1114 / GMI1000) (Ralstonia solanacearum) protein is Chaperone SurA.